Reading from the N-terminus, the 317-residue chain is Transaldolase (317 aa).

Lys126 (schiff-base intermediate with substrate) is an active-site residue.

Belongs to the transaldolase family. Type 1 subfamily. Homodimer.

It localises to the cytoplasm. The catalysed reaction is D-sedoheptulose 7-phosphate + D-glyceraldehyde 3-phosphate = D-erythrose 4-phosphate + beta-D-fructose 6-phosphate. Its pathway is carbohydrate degradation; pentose phosphate pathway; D-glyceraldehyde 3-phosphate and beta-D-fructose 6-phosphate from D-ribose 5-phosphate and D-xylulose 5-phosphate (non-oxidative stage): step 2/3. Transaldolase is important for the balance of metabolites in the pentose-phosphate pathway. The chain is Transaldolase from Burkholderia multivorans (strain ATCC 17616 / 249).